Reading from the N-terminus, the 220-residue chain is Protein GrpE (220 aa).

The protein belongs to the GrpE family. As to quaternary structure, homodimer.

Its subcellular location is the cytoplasm. Participates actively in the response to hyperosmotic and heat shock by preventing the aggregation of stress-denatured proteins, in association with DnaK and GrpE. It is the nucleotide exchange factor for DnaK and may function as a thermosensor. Unfolded proteins bind initially to DnaJ; upon interaction with the DnaJ-bound protein, DnaK hydrolyzes its bound ATP, resulting in the formation of a stable complex. GrpE releases ADP from DnaK; ATP binding to DnaK triggers the release of the substrate protein, thus completing the reaction cycle. Several rounds of ATP-dependent interactions between DnaJ, DnaK and GrpE are required for fully efficient folding. This is Protein GrpE from Bartonella quintana (strain Toulouse) (Rochalimaea quintana).